The following is a 363-amino-acid chain: G-protein coupled receptor 6 (363 aa).

Residues Met1–Pro75 are Extracellular-facing. Residues Asn2 and Asn9 are each glycosylated (N-linked (GlcNAc...) asparagine). The tract at residues Gly29–Gly48 is disordered. N-linked (GlcNAc...) asparagine glycosylation is present at Asn52. The chain crosses the membrane as a helical span at residues Trp76–Val95. Topologically, residues Ala96–Pro107 are cytoplasmic. A helical transmembrane segment spans residues Met108–Val131. The Extracellular portion of the chain corresponds to Phe132–Leu143. The chain crosses the membrane as a helical span at residues Leu144–Val165. Topologically, residues Asp166–Val186 are cytoplasmic. The helical transmembrane segment at His187–Leu206 threads the bilayer. Topologically, residues Gly207 to Leu231 are extracellular. A helical membrane pass occupies residues Ser232–Cys250. Topologically, residues Gln251–Gly278 are cytoplasmic. A helical transmembrane segment spans residues Val279–Gln305. The Extracellular segment spans residues Glu306–Ile310. The helical transmembrane segment at Tyr311–Phe332 threads the bilayer. The Cytoplasmic portion of the chain corresponds to Arg333 to Val363. The S-palmitoyl cysteine moiety is linked to residue Cys346. Ser357, Ser359, and Ser361 each carry phosphoserine.

The protein belongs to the G-protein coupled receptor 1 family. As to expression, mainly expressed in the brain. Selectively expressed in striatopallidal neurons in the striatum.

The protein resides in the cell membrane. Orphan receptor with constitutive G(s) signaling activity that activate cyclic AMP. Promotes neurite outgrowth and blocks myelin inhibition in neurons. This is G-protein coupled receptor 6 (Gpr6) from Mus musculus (Mouse).